The chain runs to 578 residues: Acyl-CoA ligase AKT1 (578 aa).

ATP-binding positions include 210–218, 350–355, aspartate 438, arginine 457, and lysine 554; these read SSGTSGAQK and QCYGAT. The segment at 281-350 is SBD1; that stretch reads DVEDLLSIVE…RHHPTWKTKQ (70 aa). Residues 351-413 are SBD2; sequence CYGATEAGTA…VSSPSLAIGY (63 aa). The Peroxisomal targeting signal type 1 signature appears at 576 to 578; it reads SKI.

Its subcellular location is the peroxisome. It functions in the pathway mycotoxin biosynthesis. Functionally, acyl-CoA ligase; part of the gene clusters that mediate the biosynthesis of the host-selective toxins (HSTs) AK-toxins responsible for Japanese pear black spot disease by the Japanese pear pathotype. AK-toxins are esters of 9,10-epoxy 8-hydroxy 9-methyldecatrienoic acid (EDA). On cellular level, AK-toxins affect plasma membrane of susceptible cells and cause a sudden increase in loss of K(+) after a few minutes of toxin treatment. The acyl-CoA ligase AKT1, the hydrolase AKT2 and enoyl-CoA hydratase AKT3 are all involved in the biosynthesis of the AK-, AF- and ACT-toxin common 9,10-epoxy-8-hydroxy-9-methyl-decatrienoic acid (EDA) structural moiety. Part of the EDA biosynthesis occurs in the peroxisome since these 3 enzymes are localized in peroxisomes. The exact roles of the 3 enzymes, as well as of additional AK-toxin clusters enzymes, including AKT4, AKT6 and AKTS1, have still to be elucidated. The Cytochrome P450 monooxygenase AKT7 on the other side functions to limit production of EDA and AK-toxin, probably via the catalysis of a side reaction of EDA or its precursor. This chain is Acyl-CoA ligase AKT1, found in Alternaria alternata (Alternaria rot fungus).